The following is an 844-amino-acid chain: Probable serine/threonine-protein kinase DDB_G0267566 (844 aa).

2 ANK repeats span residues K335 to I367 and K371 to L400. The Protein kinase domain occupies S508–V773. Residues I514–V522 and K539 each bind ATP. D634 acts as the Proton acceptor in catalysis.

The protein belongs to the protein kinase superfamily. Ser/Thr protein kinase family.

It catalyses the reaction L-seryl-[protein] + ATP = O-phospho-L-seryl-[protein] + ADP + H(+). The catalysed reaction is L-threonyl-[protein] + ATP = O-phospho-L-threonyl-[protein] + ADP + H(+). The polypeptide is Probable serine/threonine-protein kinase DDB_G0267566 (Dictyostelium discoideum (Social amoeba)).